Here is a 208-residue protein sequence, read N- to C-terminus: Small ribosomal subunit protein uS9c (208 aa).

A chloroplast-targeting transit peptide spans 1 to 52 (MASITNLASSLSSLSFSSQVSQRPNTISFPRANSVFALPAKSARRASLSITA).

This sequence belongs to the universal ribosomal protein uS9 family.

The protein localises to the plastid. It localises to the chloroplast. In terms of biological role, binds directly to 16S ribosomal RNA. This chain is Small ribosomal subunit protein uS9c (RPS9), found in Arabidopsis thaliana (Mouse-ear cress).